We begin with the raw amino-acid sequence, 197 residues long: Large ribosomal subunit protein uL11 (197 aa).

The protein belongs to the universal ribosomal protein uL11 family. In terms of assembly, part of the ribosomal stalk of the 50S ribosomal subunit. Interacts with L10 and the large rRNA to form the base of the stalk. L10 forms an elongated spine to which L12 dimers bind in a sequential fashion forming a multimeric L10(L12)X complex. One or more lysine residues are methylated.

Forms part of the ribosomal stalk which helps the ribosome interact with GTP-bound translation factors. The protein is Large ribosomal subunit protein uL11 of Mycoplasmopsis pulmonis (strain UAB CTIP) (Mycoplasma pulmonis).